Consider the following 624-residue polypeptide: Aeromonas extracellular serine protease (624 aa).

Residues 1 to 24 form the signal peptide; that stretch reads MKQTSLALAITALLSTLPSALVQA. The cysteines at positions 28 and 48 are disulfide-linked. Asn53 contributes to the Ca(2+) binding site. Residues 59-421 form the Peptidase S8 domain; the sequence is QWYLLNSGQD…GKVRDVKGLE (363 aa). The Charge relay system role is filled by Asp102. Asp111 provides a ligand contact to Ca(2+). The interval 116–140 is disordered; that stretch reads VRPGSKNVVTGSDDPTPTDPDTAHG. The Charge relay system role is filled by His139. Val150, Asn152, Ile154, Thr156, Asp321, Leu322, Gly324, Met327, Asn330, and Cys350 together coordinate Ca(2+). Cys325 and Cys350 are disulfide-bonded. Residue Ser360 is the Charge relay system of the active site. Positions 456–622 constitute a P/Homo B domain; sequence LPPLVQLPWQ…SLRVLGHDAN (167 aa). Ca(2+) is bound by residues Asp478, Asp512, Asp577, Ala579, Asn602, and Asn603.

This sequence belongs to the peptidase S8 family. Furin subfamily. In terms of assembly, forms a complex with the chaperone ORF2 in the periplasm. After translocation of the ASP-ORF2 complex from the periplasm to the extracellular space, the complex is dissociated in a pH-dependent manner. The cofactor is Ca(2+).

Its subcellular location is the periplasm. It is found in the secreted. The catalysed reaction is Cleavage of -Lys-Lys-|-Xaa and -Lys-Arg-|-Xaa bonds.. With respect to regulation, folding, maturation and production of the active form of the protease by the cell requires a protein (ORF2), encoded just downstream of asp, which acts as a chaperone. Formation of a complex with ORF2 in the periplasm also inactivates the protease activity and likely protects ASP from intrinsic proteases. In vitro, protease activity is inhibited by human alpha-2-macroglobulin, suggesting that this inhibitor can impede ASP virulence activities in A.sobria infection sites. However, slow ASP inhibition by alpha-2-macroglobulin in plasma may indicate insufficient ASP control in vivo. Activity is inhibited by serine protease inhibitors such as 4-(2-aminoethyl)-benzenesulfonyl fluoride (AEBSF) and diisopropyl fluorophosphate (DFP). Not inhibited by metallo-protease inhibitors and cysteine protease inhibitors. The treatment with reagents to modify sulfhydryl group do not reduce the activity. Its function is as follows. Exhibits serine protease activity. Preferentially cleaves the peptide bond following two basic residues, one of which is Lys, but does not recognize the bond following a single basic residue. Probable potent virulence factor that cleaves various host plasma proteins, including prekallikrein, prothrombin and fibrinogen. ASP induces vascular leakage and reduction in blood pressure by activating the host plasma kallikrein/kinin system. It affects the host coagulation system during infection through activation of prothrombin to alpha-thrombin and degradation of fibrinogen, which impairs plasma clottability. It also hydrolyzes the complement component C5, releasing the C5a anaphylatoxin, which causes the formation of pus and edema. In addition, degrades its external chaperone ORF2 after the secretion of the ASP-ORF2 complex. This Aeromonas sobria protein is Aeromonas extracellular serine protease.